Consider the following 1312-residue polypeptide: DNA repair protein RAD50 (1312 aa).

ATP-binding residues include R13, N38, G39, G41, K42, T43, T44, V67, D69, and Q159. Mg(2+) is bound at residue T43. Q159 is a binding site for Mg(2+). Coiled coils occupy residues 228–359 (TSKE…QADR), 401–598 (RERQ…AKLN), and 635–673 (SQDFESDLDRLKEEIEKSSKQRAMLAGATAVYSQFITQL). Residue S635 is modified to Phosphoserine; by ATM. The Zinc-hook domain maps to 635–734 (SQDFESDLDR…RRDEMLGLVP (100 aa)). Positions 681 and 684 each coordinate Zn(2+). T690 bears the Phosphothreonine mark. 2 coiled-coil regions span residues 706 to 734 (RLAPDKLKSTESELKKKEKRRDEMLGLVP) and 789 to 1079 (LTDV…GRQK). At K959 the chain carries N6-acetyllysine.

This sequence belongs to the SMC family. RAD50 subfamily. Component of the MRN complex composed of two heterodimers RAD50 and MRE11 associated with a single NBN. The MRN complexes dimerize on DNA to form joined MRN-MRN oligomers required for DNA double-strand break repair. As part of the MRN complex, interacts with MCM8 and MCM9; the interaction recruits the complex to DNA repair sites. Component of the BASC complex, at least composed of BRCA1, MSH2, MSH6, MLH1, ATM, BLM, RAD50, MRE11 and NBN. Found in a complex with TERF2. Interacts with RINT1. Interacts with BRCA1 via its N-terminal domain. Interacts with DCLRE1C/Artemis. Interacts with MRNIP. Interacts with CYREN (via XLF motif). Interacts with C1QBP and MRE11; interaction takes place in absence of DNA damage to form the MRC (MRE11-RAD50-C1QBP) complex that inhibits the activity of MRE11. As to quaternary structure, (Microbial infection) Interacts with herpes simplex virus 1 protein UL12. It depends on Zn(2+) as a cofactor. In terms of processing, phosphorylation at Ser-635 by ATM in response to DNA damage is required for double-strand break (DSB) repair. As to expression, expressed at very low level in most tissues, except in testis where it is expressed at higher level. Expressed in fibroblasts.

It localises to the nucleus. The protein resides in the chromosome. It is found in the telomere. It catalyses the reaction ATP + H2O = ADP + phosphate + H(+). Functionally, component of the MRN complex, which plays a central role in double-strand break (DSB) repair, DNA recombination, maintenance of telomere integrity and meiosis. The MRN complex is involved in the repair of DNA double-strand breaks (DSBs) via homologous recombination (HR), an error-free mechanism which primarily occurs during S and G2 phases. The complex (1) mediates the end resection of damaged DNA, which generates proper single-stranded DNA, a key initial steps in HR, and is (2) required for the recruitment of other repair factors and efficient activation of ATM and ATR upon DNA damage. The MRN complex possesses single-strand endonuclease activity and double-strand-specific 3'-5' exonuclease activity, which are provided by MRE11, to initiate end resection, which is required for single-strand invasion and recombination. Within the complex, RAD50 is both required to bind DNA ends and hold them in close proximity and regulate the activity of MRE11. RAD50 provides an ATP-dependent control of MRE11 by positioning DNA ends into the MRE11 active site: ATP-binding induces a large structural change from an open form with accessible MRE11 nuclease sites into a closed form. The MRN complex is also required for DNA damage signaling via activation of the ATM and ATR kinases: the nuclease activity of MRE11 is not required to activate ATM and ATR. The MRN complex is also required for the processing of R-loops. In telomeres the MRN complex may modulate t-loop formation. The polypeptide is DNA repair protein RAD50 (Homo sapiens (Human)).